The chain runs to 447 residues: UDP-glycosyltransferase 79B10 (447 aa).

Residues Ser-260, 319–321 (VQQ), 336–344 (HCGFGSMWE), and 358–361 (LADQ) contribute to the UDP-alpha-D-glucose site.

The protein belongs to the UDP-glycosyltransferase family.

In Arabidopsis thaliana (Mouse-ear cress), this protein is UDP-glycosyltransferase 79B10 (UGT79B10).